Reading from the N-terminus, the 440-residue chain is Metacaspase-1 (440 aa).

A disordered region spans residues 1-134 (MFPGSGRKTY…NPQGFGQNSG (134 aa)). The span at 14–51 (APPPGPPNGYQYGPPPGAQGQYPPPQGYPPQGYPPQGY) shows a compositional bias: pro residues. Residues 52 to 81 (PPQGYAPQGYPPQGYAPQGYAPQGYQQQGG) show a composition bias toward low complexity. Over residues 82–94 (QQQGGQQQGGQQQ) the composition is skewed to gly residues. Residues 98-110 (RQTYATQEAQNFG) are compositionally biased toward polar residues. Residues histidine 230 and cysteine 286 contribute to the active site.

The protein belongs to the peptidase C14B family.

Involved in cell death (apoptosis). This is Metacaspase-1 (MCA1) from Debaryomyces hansenii (strain ATCC 36239 / CBS 767 / BCRC 21394 / JCM 1990 / NBRC 0083 / IGC 2968) (Yeast).